Consider the following 401-residue polypeptide: Coenzyme A biosynthesis bifunctional protein CoaBC (401 aa).

The segment at 1-190 (MQTLAGKKIL…FQPKPLQDKS (190 aa)) is phosphopantothenoylcysteine decarboxylase. Cys159 acts as the Proton donor in catalysis. A phosphopantothenate--cysteine ligase region spans residues 191-401 (ILITAGPTRE…LKQIQTLMGH (211 aa)). CTP contacts are provided by residues Asp279, Lys289, 307 to 310 (PDIV), Phe326, Lys340, and Lys344.

The protein in the N-terminal section; belongs to the HFCD (homo-oligomeric flavin containing Cys decarboxylase) superfamily. In the C-terminal section; belongs to the PPC synthetase family. Mg(2+) is required as a cofactor. FMN serves as cofactor.

It catalyses the reaction N-[(R)-4-phosphopantothenoyl]-L-cysteine + H(+) = (R)-4'-phosphopantetheine + CO2. It carries out the reaction (R)-4'-phosphopantothenate + L-cysteine + CTP = N-[(R)-4-phosphopantothenoyl]-L-cysteine + CMP + diphosphate + H(+). It participates in cofactor biosynthesis; coenzyme A biosynthesis; CoA from (R)-pantothenate: step 2/5. The protein operates within cofactor biosynthesis; coenzyme A biosynthesis; CoA from (R)-pantothenate: step 3/5. Functionally, catalyzes two sequential steps in the biosynthesis of coenzyme A. In the first step cysteine is conjugated to 4'-phosphopantothenate to form 4-phosphopantothenoylcysteine. In the second step the latter compound is decarboxylated to form 4'-phosphopantotheine. This Vibrio vulnificus (strain YJ016) protein is Coenzyme A biosynthesis bifunctional protein CoaBC.